Reading from the N-terminus, the 85-residue chain is Probable Sec-independent protein translocase protein TatE (85 aa).

The helical transmembrane segment at 1–21 threads the bilayer; sequence MEGLSITKLLVVGILIVLLFG. The tract at residues 64-85 is disordered; sequence KTVAETKAASDSQAAASVERKD.

The protein belongs to the TatA/E family. TatE subfamily.

Its subcellular location is the cell inner membrane. Functionally, part of the twin-arginine translocation (Tat) system that transports large folded proteins containing a characteristic twin-arginine motif in their signal peptide across membranes. TatE shares overlapping functions with TatA. The protein is Probable Sec-independent protein translocase protein TatE of Yersinia pestis.